The chain runs to 225 residues: Small ribosomal subunit protein eS1 (225 aa).

The protein belongs to the eukaryotic ribosomal protein eS1 family.

This Methanococcus maripaludis (strain C6 / ATCC BAA-1332) protein is Small ribosomal subunit protein eS1.